The primary structure comprises 105 residues: Protein RALF-like 21 (105 aa).

A signal peptide spans 1–30; it reads MSNMKITNRFMLVATFIACVFISSMNMTVG. Disulfide bonds link cysteine 44-cysteine 53 and cysteine 67-cysteine 73.

This sequence belongs to the plant rapid alkalinization factor (RALF) family. In terms of tissue distribution, expressed in seeds and rosettes.

Its subcellular location is the secreted. In terms of biological role, cell signaling peptide that may regulate plant stress, growth, and development. Mediates a rapid alkalinization of extracellular space by mediating a transient increase in the cytoplasmic Ca(2+) concentration leading to a calcium-dependent signaling events through a cell surface receptor and a concomitant activation of some intracellular mitogen-activated protein kinases. The sequence is that of Protein RALF-like 21 (RALFL21) from Arabidopsis thaliana (Mouse-ear cress).